The sequence spans 483 residues: uncharacterized protein (483 aa).

Residues 96-137 form a WD repeat; it reads IQCDQDPLSSISWSPSGELLLWSSFDSKITVWSLNTQKGYLL.

This is an uncharacterized protein from Schizosaccharomyces pombe (strain 972 / ATCC 24843) (Fission yeast).